Reading from the N-terminus, the 357-residue chain is Red-sensitive opsin (357 aa).

At 1 to 49 (MAEQWGKQVFAARRQNEDTTRGSAFTYTNSNHTRDPFEGPNYHIAPRWV) the chain is on the extracellular side. The N-linked (GlcNAc...) asparagine glycan is linked to asparagine 31. The chain crosses the membrane as a helical span at residues 50 to 74 (YNLATLWMFFVVVLSVFTNGLVLVA). The Cytoplasmic portion of the chain corresponds to 75-86 (TAKFKKLRHPLN). A helical membrane pass occupies residues 87 to 112 (WILSNLAIADLGETVFASTISVCNQF). The Extracellular portion of the chain corresponds to 113–126 (FGYFILGHPMCVFE). Cysteine 123 and cysteine 200 are disulfide-bonded. A helical membrane pass occupies residues 127–146 (GYVVSTCGIAALWSLTIISW). Residues 147–165 (ERWVVVCKPFGNVKFDAKW) lie on the Cytoplasmic side of the membrane. The chain crosses the membrane as a helical span at residues 166–189 (AIGGIVFSWVWSAVWCAPPVFGWS). At 190 to 215 (RYWPHGLKTSCGPDVFSGSDDPGVQS) the chain is on the extracellular side. A helical membrane pass occupies residues 216–243 (YMIVLMITCCIIPLAIIILCYLAVWLAI). At 244-265 (RAVAMQQKESESTQKAEREVSR) the chain is on the cytoplasmic side. A helical transmembrane segment spans residues 266–289 (MVVVMIVAYCVCWGPYTFFACFAA). Over 290-297 (ANPGYAFH) the chain is Extracellular. Residues 298–322 (PLAAAMPAYFAKSATIYNPVIYVFM) form a helical membrane-spanning segment. The residue at position 309 (lysine 309) is an N6-(retinylidene)lysine. At 323-357 (NRQFRTCIMQLFGKQVDDGSEVSTSKTEVSSVAPA) the chain is on the cytoplasmic side.

This sequence belongs to the G-protein coupled receptor 1 family. Opsin subfamily. In terms of processing, phosphorylated on some or all of the serine and threonine residues present in the C-terminal region. The color pigments are found in the cone photoreceptor cells.

The protein resides in the membrane. In terms of biological role, visual pigments are the light-absorbing molecules that mediate vision. They consist of an apoprotein, opsin, covalently linked to cis-retinal. The polypeptide is Red-sensitive opsin (Oryzias latipes (Japanese rice fish)).